A 502-amino-acid chain; its full sequence is tRNA-specific adenosine deaminase 1 (502 aa).

In terms of domain architecture, A to I editase spans Ser-63 to Phe-501. His-87 serves as a coordination point for Zn(2+). The active-site Proton donor is the Glu-89. 2 residues coordinate 1D-myo-inositol hexakisphosphate: Arg-93 and Arg-94. Cys-142 contributes to the Zn(2+) binding site. Ser-191 carries the phosphoserine modification. Cys-299 is a binding site for Zn(2+). 1D-myo-inositol hexakisphosphate contacts are provided by Lys-302, Arg-305, Lys-435, and Lys-470.

The protein belongs to the ADAT1 family. 1D-myo-inositol hexakisphosphate serves as cofactor.

The enzyme catalyses adenosine(37) in tRNA(Ala) + H2O + H(+) = inosine(37) in tRNA(Ala) + NH4(+). Its function is as follows. Specifically deaminates adenosine-37 to inosine in tRNA-Ala. In Macaca fascicularis (Crab-eating macaque), this protein is tRNA-specific adenosine deaminase 1 (ADAT1).